Reading from the N-terminus, the 557-residue chain is Leucine-rich glioma-inactivated protein 1 (557 aa).

A signal peptide spans 1–34 (MESERSKRMGNACIPLKRIAYFLCLLSALLLTEG). One can recognise an LRRNT domain in the interval 35–72 (KKPAKPKCPAVCTCTKDNALCENARSIPRTVPPDVISL). 3 LRR repeats span residues 92-113 (SLQL…AFIG), 116-137 (HLEY…TFRG), and 140-161 (SLIH…IFKG). An LRRCT domain is found at 173–223 (NSFNCDCKLKWLVEWLGHTNATVEDIYCEGPPEYKKRKINSLSSKDFDCII). Asn192 carries N-linked (GlcNAc...) asparagine glycosylation. 7 EAR repeats span residues 225–267 (EFAK…EWDH), 271–313 (TFRN…KRDS), 317–364 (KFIK…KWNG), 366–415 (GFYS…QWNK), 419–462 (LFTN…KWGG), 464–506 (SFQD…NWDA), and 510–552 (KFVK…KHVI). Asn277 carries an N-linked (GlcNAc...) asparagine glycan. The N-linked (GlcNAc...) asparagine glycan is linked to Asn422.

In terms of assembly, oligomer. Interacts with KCNA1 within a complex containing KCNA1, KCNA4 and KCNAB1. Part of a complex containing ADAM22, DLG4/PSD95 and CACNG2/Stargazin. Can bind to ADAM11 and ADAM23. Post-translationally, glycosylated. Predominantly expressed in neural tissues, especially in brain. Expression is reduced in low-grade brain tumors and significantly reduced or absent in malignant gliomas. In terms of tissue distribution, expressed in the occipital cortex and hippocampus; higher amounts are observed in the parietal and frontal cortices, putamen, and, particularly, in the temporal neocortex, where it is between 3 and 5 times more abundant than in the hippocampus (at protein level). Expression is absent in the cerebellum. As to expression, abundantly expressed in the occipital cortex and weakly expressed in the hippocampus (at protein level).

The protein localises to the secreted. Its subcellular location is the synapse. It localises to the cytoplasm. It is found in the golgi apparatus. The protein resides in the endoplasmic reticulum. Its function is as follows. Regulates voltage-gated potassium channels assembled from KCNA1, KCNA4 and KCNAB1. It slows down channel inactivation by precluding channel closure mediated by the KCNAB1 subunit. Ligand for ADAM22 that positively regulates synaptic transmission mediated by AMPA-type glutamate receptors. Plays a role in suppressing the production of MMP1/3 through the phosphatidylinositol 3-kinase/ERK pathway. May play a role in the control of neuroblastoma cell survival. The sequence is that of Leucine-rich glioma-inactivated protein 1 (LGI1) from Homo sapiens (Human).